The primary structure comprises 70 residues: U-scutigerotoxin(02)-Tl1a (70 aa).

The N-terminal stretch at 1-17 (MKYILLGLLLMVVLANA) is a signal peptide.

This sequence belongs to the scutigerotoxin-02 family. Contains 4 disulfide bonds. In terms of tissue distribution, expressed by the venom gland.

It is found in the secreted. The protein is U-scutigerotoxin(02)-Tl1a of Thereuopoda longicornis (Long-legged centipede).